Consider the following 38-residue polypeptide: Large ribosomal subunit protein bL36 (38 aa).

The protein belongs to the bacterial ribosomal protein bL36 family.

This Synechocystis sp. (strain ATCC 27184 / PCC 6803 / Kazusa) protein is Large ribosomal subunit protein bL36.